The chain runs to 119 residues: Fluoride-specific ion channel FluC 2 (119 aa).

The next 2 helical transmembrane spans lie at 1 to 21 (MIFAVGFGASLGAVARYALTS) and 44 to 64 (GAFFLGLAFALRLPASVYAFL). Na(+) contacts are provided by Gly-70 and Thr-73. A helical membrane pass occupies residues 98 to 118 (LLASYLGGAVLLTCGYYLGSL).

The protein belongs to the fluoride channel Fluc/FEX (TC 1.A.43) family.

The protein localises to the cell membrane. The enzyme catalyses fluoride(in) = fluoride(out). Na(+) is not transported, but it plays an essential structural role and its presence is essential for fluoride channel function. In terms of biological role, fluoride-specific ion channel. Important for reducing fluoride concentration in the cell, thus reducing its toxicity. The chain is Fluoride-specific ion channel FluC 2 from Lactobacillus delbrueckii subsp. bulgaricus (strain ATCC 11842 / DSM 20081 / BCRC 10696 / JCM 1002 / NBRC 13953 / NCIMB 11778 / NCTC 12712 / WDCM 00102 / Lb 14).